Here is a 247-residue protein sequence, read N- to C-terminus: Type II restriction enzyme SmaI (247 aa).

It depends on Mg(2+) as a cofactor. K(+) serves as cofactor.

The enzyme catalyses Endonucleolytic cleavage of DNA to give specific double-stranded fragments with terminal 5'-phosphates.. Its function is as follows. A P subtype restriction enzyme that recognizes the double-stranded sequence 5'-CCCGGG-3' and cleaves after C-3. This Serratia marcescens protein is Type II restriction enzyme SmaI (smaIR).